A 463-amino-acid polypeptide reads, in one-letter code: Mitochondrial dynamics protein MID49 (463 aa).

At 1 to 24 (MAELQIRKKEKKSGDGIGTMVDFL) the chain is on the mitochondrial intermembrane side. The helical transmembrane segment at 25 to 47 (LANARLVLGVGGAAMLGIATLAV) threads the bilayer. Topologically, residues 48–463 (KRLIDRATSP…EPDDVLKRER (416 aa)) are cytoplasmic. The segment at 87-119 (TLRRKEDLEHHCAPLSLPDPSQKMPEATGTSQV) is disordered. Positions 89–98 (RRKEDLEHHC) are enriched in basic and acidic residues.

This sequence belongs to the MID49/MID51 family.

Its subcellular location is the mitochondrion outer membrane. In terms of biological role, mitochondrial outer membrane protein which regulates mitochondrial organization. It is required for mitochondrial fission and promotes the recruitment and association of the fission mediator dynamin-related protein 1 (DNM1L) to the mitochondrial surface independently of the mitochondrial fission FIS1 and MFF proteins. Regulates DNM1L GTPase activity. This is Mitochondrial dynamics protein MID49 (mief2) from Xenopus laevis (African clawed frog).